The following is a 293-amino-acid chain: Putative serine protease 42 (293 aa).

The N-terminal stretch at methionine 1 to alanine 26 is a signal peptide. A disordered region spans residues leucine 33–leucine 60. In terms of domain architecture, Peptidase S1 spans isoleucine 80–arginine 293. A disulfide bond links cysteine 105 and cysteine 121. Histidine 120 acts as the Charge relay system in catalysis. A glycan (N-linked (GlcNAc...) asparagine) is linked at asparagine 141. Aspartate 166 (charge relay system) is an active-site residue. A glycan (N-linked (GlcNAc...) asparagine) is linked at asparagine 177. Cystine bridges form between cysteine 200/cysteine 273, cysteine 232/cysteine 253, and cysteine 263/cysteine 291. The Charge relay system role is filled by serine 267. An N-linked (GlcNAc...) asparagine glycan is attached at asparagine 276.

It belongs to the peptidase S1 family.

The protein localises to the cytoplasm. The protein resides in the cell membrane. Its function is as follows. Plays a role in spermatogenesis. Involved in germ cell survival during meiosis. This is Putative serine protease 42 from Homo sapiens (Human).